The primary structure comprises 159 residues: NADH-quinone oxidoreductase subunit I (159 aa).

2 consecutive 4Fe-4S ferredoxin-type domains span residues 51 to 80 (RRYE…IEAD) and 90 to 119 (TRYD…EGPN). Positions 60, 63, 66, 70, 99, 102, 105, and 109 each coordinate [4Fe-4S] cluster.

It belongs to the complex I 23 kDa subunit family. As to quaternary structure, NDH-1 is composed of 14 different subunits. Subunits NuoA, H, J, K, L, M, N constitute the membrane sector of the complex. [4Fe-4S] cluster serves as cofactor.

It localises to the cell inner membrane. The enzyme catalyses a quinone + NADH + 5 H(+)(in) = a quinol + NAD(+) + 4 H(+)(out). In terms of biological role, NDH-1 shuttles electrons from NADH, via FMN and iron-sulfur (Fe-S) centers, to quinones in the respiratory chain. The immediate electron acceptor for the enzyme in this species is believed to be ubiquinone. Couples the redox reaction to proton translocation (for every two electrons transferred, four hydrogen ions are translocated across the cytoplasmic membrane), and thus conserves the redox energy in a proton gradient. The chain is NADH-quinone oxidoreductase subunit I from Rickettsia rickettsii (strain Sheila Smith).